The following is a 94-amino-acid chain: MHITEVLKKPVLTEKSFAGHKDNVYTFLVDKKANKVQIKKTFEEIFEVKVESVRTINYDAKEKRLGKYVGKKPSYKKAIITLKEGQKLDVLSDL.

Belongs to the universal ribosomal protein uL23 family. As to quaternary structure, part of the 50S ribosomal subunit. Contacts protein L29, and trigger factor when it is bound to the ribosome.

Functionally, one of the early assembly proteins it binds 23S rRNA. One of the proteins that surrounds the polypeptide exit tunnel on the outside of the ribosome. Forms the main docking site for trigger factor binding to the ribosome. The polypeptide is Large ribosomal subunit protein uL23 (Mycoplasma mycoides subsp. mycoides SC (strain CCUG 32753 / NCTC 10114 / PG1)).